A 412-amino-acid chain; its full sequence is MSTINKNILESLKGELKRQQDHIELIASENYVSDAVLQLSGSILTNKYAEGYPDKRYYGGCEFVDQIEKQGIELAKKIFNAGHANLQPHSGSQANEAVYRALLQNGDKVVSMSLDAGGHLTHGYPINFSGNNYDFKFYGVNRETEEIDFDEVRKVVLEHQPKLIVAGASAYSRIIDFKKFREIADEVGALLMVDMAHIAGLVAGGAHPNPMEYADVVTTTTHKTLRGARGGMILSKAEIGKKIDSSVFPGTQGGPLENQIAGKVQALYEADTPEFKEYVHQVVANSKAFAKALADNGMRLIANGTDNHLINLDVKNTLNVTGKDAEKILESIGIVSNKNMIPFDTEKPFVTSGIRVGTAAMTTRGFKEEQFVEVAKIIASALKDQSETNLNTLSKEVAKLCKQFPIYEHLSY.

Residues L114 and 118-120 contribute to the (6S)-5,6,7,8-tetrahydrofolate site; that span reads GHL. The residue at position 223 (K223) is an N6-(pyridoxal phosphate)lysine.

It belongs to the SHMT family. In terms of assembly, homodimer. Pyridoxal 5'-phosphate is required as a cofactor.

The protein localises to the cytoplasm. It catalyses the reaction (6R)-5,10-methylene-5,6,7,8-tetrahydrofolate + glycine + H2O = (6S)-5,6,7,8-tetrahydrofolate + L-serine. The protein operates within one-carbon metabolism; tetrahydrofolate interconversion. It participates in amino-acid biosynthesis; glycine biosynthesis; glycine from L-serine: step 1/1. Its function is as follows. Catalyzes the reversible interconversion of serine and glycine with tetrahydrofolate (THF) serving as the one-carbon carrier. This reaction serves as the major source of one-carbon groups required for the biosynthesis of purines, thymidylate, methionine, and other important biomolecules. Also exhibits THF-independent aldolase activity toward beta-hydroxyamino acids, producing glycine and aldehydes, via a retro-aldol mechanism. The polypeptide is Serine hydroxymethyltransferase (Mesoplasma florum (strain ATCC 33453 / NBRC 100688 / NCTC 11704 / L1) (Acholeplasma florum)).